The following is a 418-amino-acid chain: Light-independent protochlorophyllide reductase subunit N (418 aa).

[4Fe-4S] cluster contacts are provided by Cys17, Cys42, and Cys103.

Belongs to the BchN/ChlN family. As to quaternary structure, protochlorophyllide reductase is composed of three subunits; ChlL, ChlN and ChlB. Forms a heterotetramer of two ChlB and two ChlN subunits. The cofactor is [4Fe-4S] cluster.

The enzyme catalyses chlorophyllide a + oxidized 2[4Fe-4S]-[ferredoxin] + 2 ADP + 2 phosphate = protochlorophyllide a + reduced 2[4Fe-4S]-[ferredoxin] + 2 ATP + 2 H2O. Its pathway is porphyrin-containing compound metabolism; chlorophyll biosynthesis (light-independent). Component of the dark-operative protochlorophyllide reductase (DPOR) that uses Mg-ATP and reduced ferredoxin to reduce ring D of protochlorophyllide (Pchlide) to form chlorophyllide a (Chlide). This reaction is light-independent. The NB-protein (ChlN-ChlB) is the catalytic component of the complex. The polypeptide is Light-independent protochlorophyllide reductase subunit N (Prochlorococcus marinus (strain MIT 9303)).